Consider the following 1717-residue polypeptide: PH domain leucine-rich repeat-containing protein phosphatase 1 (1717 aa).

Position 1 is an N-acetylmethionine (Met-1). Disordered regions lie at residues 1–25, 41–118, 136–156, and 252–470; these read MEPAAAATVQRLPELGREDRASAPA, LAAA…GANS, AASSSSSSSAAAASHSPGAAG, and PGAA…PPPT. Positions 98–110 are enriched in low complexity; it reads APQPIAGGAAPVP. Over residues 262-274 the composition is skewed to pro residues; it reads EPPPEAGPRLAPP. Composition is skewed to low complexity over residues 313–325 and 333–345; these read SRRASPAPSDSSP and PVSSPRAPRPVVS. Ser-317 is subject to Phosphoserine. Polar residues-rich tracts occupy residues 346-358 and 408-417; these read DTESFSLSPSAES and QTASSPQPQQ. Ser-412 carries the post-translational modification Phosphoserine. The region spanning 536-636 is the PH domain; the sequence is RIQLSGMYNV…WLRQVSKVAS (101 aa). LRR repeat units lie at residues 638 to 659, 661 to 682, 692 to 712, 715 to 736, 738 to 760, 761 to 783, 784 to 804, 808 to 831, 832 to 853, 873 to 894, 895 to 916, 918 to 939, 941 to 962, 963 to 984, 987 to 1008, 1013 to 1033, 1037 to 1058, 1061 to 1082, 1084 to 1105, 1106 to 1127, and 1129 to 1150; these read RISSVDLSCCSLEHLPANLFYS, DLTHLNLKQNFLRQNPSLPAAR, KLKSLNLSNNHLGDFPLAVCS, TLAELNVSCNALRSVPAAVGVM, NLQTFLLDGNFLQSLPAELENMK, QLSYLGLSFNEFTDIPEVLEKLT, AVDKLCMSGNCVETLRLQALR, HIKHVDLRLNVIRKLIADEVDFLQ, HVTQLDLRDNKLGDLDAMIFNN, FLKALYASSNELVQLDVYPVPN, YLSYMDVSRNRLENVPEWVCES, KLEVLDIGHNQICELPARLFCN, SLRKLLAGHNQLARLPERLERT, SVEVLDVQHNQLLELPPNLLMK, SLRFLNASANKLESLPPATLSE, ILQELYLTNNSLTDKCVPLLT, HLKILHMAYNRLQSFPASKMAK, ELEEIDLSGNKLKAIPTTIMNC, RMHTVIAHSNCIEVFPEVMQLP, EIKCVDLSCNELSEVTLPENLP, and KLQELDLTGNPRLVLDHKTLEL. The segment at 1076-1205 is interaction with NHERF1; sequence PTTIMNCRRM…NNFCDNREAL (130 aa). Residues 1175 to 1422 enclose the PPM-type phosphatase domain; sequence SHGYTEASGV…DSISAVVVQL (248 aa). Asp-1210, Gly-1211, Lys-1374, and Asp-1413 together coordinate Mn(2+). Disordered regions lie at residues 1458–1510 and 1673–1717; these read DRPS…SPAY and EVKE…DTPL. Residues 1468 to 1489 are compositionally biased toward low complexity; that stretch reads SSSSGMASEISSELSTSEMSSE. A PDZ-binding; required for interaction with NHERF1 motif is present at residues 1715-1717; the sequence is TPL.

As to quaternary structure, interacts with the nucleotide free form of K-Ras (KRAS) via its LRR repeats. Interacts with AKT2, AKT3, PRKCB isoform beta-II, STK4, RPS6KB1, RAF1. Isoform 1 (predominantly) and isoform 2 interact with BRAP. Interacts with FKBP5; FKBP5 acts as a scaffold for PHLPP1 and Akt. Interacts with SCRIB; SCRIB acts as a scaffold for PHLPP1 and Akt. Interacts with NHERF1; NHERF1 scaffolds a heterotrimeric complex with PTEN at the plasma membrane. Interacts with WDR48 and USP12. The cofactor is Mn(2+). In terms of tissue distribution, in colorectal cancer tissue, expression is highest in the surface epithelium of normal colonic mucosa adjacent to the cancer tissue but is largely excluded from the crypt bases. Expression is lost or significantly decreased in 78% of tested tumors (at protein level). Ubiquitously expressed in non-cancerous tissues.

The protein resides in the cytoplasm. The protein localises to the membrane. It is found in the nucleus. It localises to the cell membrane. The catalysed reaction is O-phospho-L-seryl-[protein] + H2O = L-seryl-[protein] + phosphate. It carries out the reaction O-phospho-L-threonyl-[protein] + H2O = L-threonyl-[protein] + phosphate. Its activity is regulated as follows. Insensitive to okadaic acid. Deubiquitination by WDR48-USP12 complex positively regulates PHLPP1 stability. Its function is as follows. Protein phosphatase involved in regulation of Akt and PKC signaling. Mediates dephosphorylation in the C-terminal domain hydrophobic motif of members of the AGC Ser/Thr protein kinase family; specifically acts on 'Ser-473' of AKT2 and AKT3, 'Ser-660' of PRKCB and 'Ser-657' of PRKCA. Isoform 2 seems to have a major role in regulating Akt signaling in hippocampal neurons. Akt regulates the balance between cell survival and apoptosis through a cascade that primarily alters the function of transcription factors that regulate pro- and antiapoptotic genes. Dephosphorylation of 'Ser-473' of Akt triggers apoptosis and suppression of tumor growth. Dephosphorylation of PRKCA and PRKCB leads to their destabilization and degradation. Dephosphorylates STK4 on 'Thr-387' leading to STK4 activation and apoptosis. Dephosphorylates RPS6KB1 and is involved in regulation of cap-dependent translation. Inhibits cancer cell proliferation and may act as a tumor suppressor. Dephosphorylates RAF1 inhibiting its kinase activity. May act as a negative regulator of K-Ras signaling in membrane rafts. Involved in the hippocampus-dependent long-term memory formation. Involved in circadian control by regulating the consolidation of circadian periodicity after resetting. Involved in development and function of regulatory T-cells. The chain is PH domain leucine-rich repeat-containing protein phosphatase 1 (PHLPP1) from Homo sapiens (Human).